Consider the following 752-residue polypeptide: Photosystem I P700 chlorophyll a apoprotein A1 (752 aa).

8 helical membrane passes run I73–A96, L159–H182, L198–A222, I294–Y312, W349–Y372, L388–V414, A436–H458, and F533–L551. 2 residues coordinate [4Fe-4S] cluster: C575 and C584. 2 consecutive transmembrane segments (helical) span residues H591–W612 and L666–F688. H677 serves as a coordination point for chlorophyll a'. Residues M685 and Y693 each contribute to the chlorophyll a site. Residue W694 participates in phylloquinone binding. Residues A726–A746 form a helical membrane-spanning segment.

It belongs to the PsaA/PsaB family. In terms of assembly, the PsaA/B heterodimer binds the P700 chlorophyll special pair and subsequent electron acceptors. PSI consists of a core antenna complex that captures photons, and an electron transfer chain that converts photonic excitation into a charge separation. The cyanobacterial PSI reaction center is composed of one copy each of PsaA,B,C,D,E,F,I,J,K,L,M and X, and forms trimeric complexes. PSI electron transfer chain: 5 chlorophyll a, 1 chlorophyll a', 2 phylloquinones and 3 4Fe-4S clusters. PSI core antenna: 90 chlorophyll a, 22 carotenoids, 3 phospholipids and 1 galactolipid. P700 is a chlorophyll a/chlorophyll a' dimer, A0 is one or more chlorophyll a, A1 is one or both phylloquinones and FX is a shared 4Fe-4S iron-sulfur center. serves as cofactor.

It is found in the cellular thylakoid membrane. The catalysed reaction is reduced [plastocyanin] + hnu + oxidized [2Fe-2S]-[ferredoxin] = oxidized [plastocyanin] + reduced [2Fe-2S]-[ferredoxin]. In terms of biological role, psaA and PsaB bind P700, the primary electron donor of photosystem I (PSI), as well as the electron acceptors A0, A1 and FX. PSI is a plastocyanin/cytochrome c6-ferredoxin oxidoreductase, converting photonic excitation into a charge separation, which transfers an electron from the donor P700 chlorophyll pair to the spectroscopically characterized acceptors A0, A1, FX, FA and FB in turn. Oxidized P700 is reduced on the lumenal side of the thylakoid membrane by plastocyanin or cytochrome c6. This Nostoc sp. (strain PCC 7120 / SAG 25.82 / UTEX 2576) protein is Photosystem I P700 chlorophyll a apoprotein A1.